The following is a 340-amino-acid chain: Uroporphyrinogen decarboxylase (340 aa).

Residues 21-25 (RQAGR), D71, Y147, S202, and H315 contribute to the substrate site.

Belongs to the uroporphyrinogen decarboxylase family. Homodimer.

Its subcellular location is the cytoplasm. It carries out the reaction uroporphyrinogen III + 4 H(+) = coproporphyrinogen III + 4 CO2. The protein operates within porphyrin-containing compound metabolism; protoporphyrin-IX biosynthesis; coproporphyrinogen-III from 5-aminolevulinate: step 4/4. Functionally, catalyzes the decarboxylation of four acetate groups of uroporphyrinogen-III to yield coproporphyrinogen-III. The chain is Uroporphyrinogen decarboxylase from Nautilia profundicola (strain ATCC BAA-1463 / DSM 18972 / AmH).